The sequence spans 291 residues: N-acetylmannosamine kinase (291 aa).

Residues 5–12 (AIDIGGTK) and 132–139 (GVGGGVVS) each bind ATP. Residues His-156, Cys-166, Cys-168, and Cys-173 each contribute to the Zn(2+) site.

Belongs to the ROK (NagC/XylR) family. NanK subfamily. As to quaternary structure, homodimer.

The catalysed reaction is an N-acyl-D-mannosamine + ATP = an N-acyl-D-mannosamine 6-phosphate + ADP + H(+). It participates in amino-sugar metabolism; N-acetylneuraminate degradation; D-fructose 6-phosphate from N-acetylneuraminate: step 2/5. Functionally, catalyzes the phosphorylation of N-acetylmannosamine (ManNAc) to ManNAc-6-P. The sequence is that of N-acetylmannosamine kinase from Escherichia coli O1:K1 / APEC.